The following is a 540-amino-acid chain: Fumonisin B1 esterase (540 aa).

S240 (acyl-ester intermediate) is an active-site residue. Catalysis depends on charge relay system residues E356 and H448. The tract at residues 521–540 (QVGSGEGLGVSPSKACQPSK) is disordered.

Belongs to the type-B carboxylesterase/lipase family.

The catalysed reaction is fumonisin B1 + 2 H2O = 2 tricarballylate + (2S,3S,5R,10R,12S,14S,15R,16R)-2-amino-12,16-dimethylicosane-3,5,10,14,15-pentol + 2 H(+). Functionally, involved in degradation of fumonisin B1. Catalyzes the hydrolysis of fumonisin B1 (FB1) to aminopentol (HFB1). This Sphingopyxis macrogoltabida (Sphingomonas macrogoltabidus) protein is Fumonisin B1 esterase (fumD).